The primary structure comprises 370 residues: tRNA N(3)-cytidine methyltransferase METTL2 (370 aa).

S-adenosyl-L-methionine-binding residues include W72, Y76, G181, D206, D232, L233, and I253.

It belongs to the methyltransferase superfamily. METL family. Monomer.

It localises to the cytoplasm. The enzyme catalyses cytidine(32) in tRNA(Thr) + S-adenosyl-L-methionine = N(3)-methylcytidine(32) in tRNA(Thr) + S-adenosyl-L-homocysteine + H(+). It catalyses the reaction cytidine(32) in tRNA(Arg)(CCU) + S-adenosyl-L-methionine = N(3)-methylcytidine(32) in tRNA(Arg)(CCU) + S-adenosyl-L-homocysteine + H(+). Its function is as follows. S-adenosyl-L-methionine-dependent methyltransferase that mediates N(3)-methylcytidine modification of residue 32 of the tRNA anticodon loop of tRNA(Thr)(UGU) and tRNA(Arg)(CCU). N(3)-methylcytidine methylation by METTL2 requires the N6-threonylcarbamoylation of tRNA (t6A37) by the EKC/KEOPS complex as prerequisite. The polypeptide is tRNA N(3)-cytidine methyltransferase METTL2 (METTL2) (Gallus gallus (Chicken)).